Reading from the N-terminus, the 363-residue chain is Histidinol-phosphate aminotransferase (363 aa).

K220 carries the post-translational modification N6-(pyridoxal phosphate)lysine.

This sequence belongs to the class-II pyridoxal-phosphate-dependent aminotransferase family. Histidinol-phosphate aminotransferase subfamily. As to quaternary structure, homodimer. The cofactor is pyridoxal 5'-phosphate.

It carries out the reaction L-histidinol phosphate + 2-oxoglutarate = 3-(imidazol-4-yl)-2-oxopropyl phosphate + L-glutamate. The protein operates within amino-acid biosynthesis; L-histidine biosynthesis; L-histidine from 5-phospho-alpha-D-ribose 1-diphosphate: step 7/9. This Chlorobium chlorochromatii (strain CaD3) protein is Histidinol-phosphate aminotransferase.